The chain runs to 185 residues: HTH-type transcriptional regulator Hpr (185 aa).

An HTH marR-type domain is found at 13–157; that stretch reads AMIFSQRIAQ…LIAILRNIYG (145 aa). The H-T-H motif DNA-binding region spans 63-86; it reads ISEIAKFGVMHVSTAFNFSKKLEE.

As to quaternary structure, homodimer.

Its function is as follows. Negative regulator of protease production and sporulation. In Bacillus cytotoxicus (strain DSM 22905 / CIP 110041 / 391-98 / NVH 391-98), this protein is HTH-type transcriptional regulator Hpr.